We begin with the raw amino-acid sequence, 239 residues long: Seed lectin beta chain (239 aa).

The D-glucose site is built by Asp-88 and Gly-106. The Mn(2+) site is built by Glu-126 and Asp-128. The Ca(2+) site is built by Asp-128, Asn-132, and Asp-137. The Mn(2+) site is built by Asp-137 and His-142. D-glucose contacts are provided by Gly-217 and Ala-218.

It belongs to the leguminous lectin family. As to quaternary structure, tetramer consisting of heterodimers of alpha and beta chains.

Its function is as follows. Galactose-binding lectin. Agglutinates human erythrocytes, and requires Ca(2+) and Mn(2+) ions for full agglutinating activity. Has antifungal activity against Fusarium sp., A.niger and A.flavus. This chain is Seed lectin beta chain, found in Spatholobus parviflorus (Butea parviflora).